Reading from the N-terminus, the 339-residue chain is MKTKNVKLLFFFFSVSLLLIAVVNAAEGHSHGGPKCECSHEDDHENKAGARKYKIAAIPTVLIAGIIGVLFPLLGKVFPSLRPETCFFFVTKAFAAGVILATGFMHVLPEAYEMLNSPCLTSEAWEFPFTGFIAMIAAILTLSVDTFATSSFYKSHCKASKRVSDGETGESSVDSEKVQILRTRVIAQVLELGIIVHSVVIGISLGASQSPDAAKALFIALMFHQCFEGLGLGGCIAQGKFKCLSVTIMSTFFAITTPIGIVVGMGIANSYDESSPTALIVQGVLNAASAGILIYMSLVDLLAADFTHPKMQSNTGLQIMAHIALLLGAGLMSLLAKWA.

The first 25 residues, 1–25, serve as a signal peptide directing secretion; that stretch reads MKTKNVKLLFFFFSVSLLLIAVVNA. Over 26–54 the chain is Extracellular; that stretch reads AEGHSHGGPKCECSHEDDHENKAGARKYK. A helical transmembrane segment spans residues 55–75; it reads IAAIPTVLIAGIIGVLFPLLG. Topologically, residues 76-86 are cytoplasmic; that stretch reads KVFPSLRPETC. The helical transmembrane segment at 87–107 threads the bilayer; sequence FFFVTKAFAAGVILATGFMHV. Topologically, residues 108–123 are extracellular; the sequence is LPEAYEMLNSPCLTSE. Residues 124 to 144 traverse the membrane as a helical segment; that stretch reads AWEFPFTGFIAMIAAILTLSV. Over 145–184 the chain is Cytoplasmic; sequence DTFATSSFYKSHCKASKRVSDGETGESSVDSEKVQILRTR. A helical transmembrane segment spans residues 185-205; sequence VIAQVLELGIIVHSVVIGISL. The Extracellular segment spans residues 206–216; sequence GASQSPDAAKA. A helical membrane pass occupies residues 217–237; sequence LFIALMFHQCFEGLGLGGCIA. Residues 238–247 are Cytoplasmic-facing; it reads QGKFKCLSVT. A helical membrane pass occupies residues 248–268; that stretch reads IMSTFFAITTPIGIVVGMGIA. The Extracellular portion of the chain corresponds to 269–278; the sequence is NSYDESSPTA. A helical membrane pass occupies residues 279-299; sequence LIVQGVLNAASAGILIYMSLV. The Cytoplasmic portion of the chain corresponds to 300–315; the sequence is DLLAADFTHPKMQSNT. The chain crosses the membrane as a helical span at residues 316-336; sequence GLQIMAHIALLLGAGLMSLLA. At 337–339 the chain is on the extracellular side; the sequence is KWA.

Belongs to the ZIP transporter (TC 2.A.5) family. As to expression, expressed predominantly in the roots of zinc-deficient plants.

It is found in the cell membrane. Functionally, mediates zinc uptake from the rhizosphere. May also transport other divalent cations. In Arabidopsis thaliana (Mouse-ear cress), this protein is Zinc transporter 3 (ZIP3).